A 92-amino-acid polypeptide reads, in one-letter code: Small ribosomal subunit protein uS19c (92 aa).

Belongs to the universal ribosomal protein uS19 family.

The protein resides in the plastid. It localises to the cyanelle. Functionally, protein S19 forms a complex with S13 that binds strongly to the 16S ribosomal RNA. The polypeptide is Small ribosomal subunit protein uS19c (rps19) (Cyanophora paradoxa).